The following is a 1082-amino-acid chain: Sodium/potassium exporting P-type ATPase 2 (1082 aa).

The Cytoplasmic segment spans residues 1-75 (MSSINTNVAE…GANTLGDGDK (75 aa)). The chain crosses the membrane as a helical span at residues 76–96 (ISLTKIIAHQVCNAMILVLII). Residues 97 to 98 (SM) lie on the Extracellular side of the membrane. A helical membrane pass occupies residues 99-119 (VIALAIKDWISGGVIGFVVLI). Over 120–308 (NISVGFVQEY…VGTPLQRKLS (189 aa)) the chain is Cytoplasmic. The chain crosses the membrane as a helical span at residues 309-329 (WLAIFLFWGCRYFCNYCNGIP). Topologically, residues 330–336 (KNRVNKE) are extracellular. A helical membrane pass occupies residues 337-357 (VAIYAICVALSMIPSALIVVL). The Cytoplasmic portion of the chain corresponds to 358-807 (TITMAVGAQV…RMSSNIQKFV (450 aa)). The active-site 4-aspartylphosphate intermediate is the aspartate 393. Mg(2+) contacts are provided by aspartate 393 and threonine 395. Residues threonine 395, glutamate 499, lysine 552, arginine 604, threonine 664, glycine 665, aspartate 666, arginine 723, and lysine 729 each coordinate ATP. Residue aspartate 748 participates in Mg(2+) binding. Asparagine 751 serves as a coordination point for ATP. Residues 808–828 (LQLLAENVAQALYLMVGLAFI) traverse the membrane as a helical segment. At 829–832 (DDSG) the chain is on the extracellular side. Residues 833 to 853 (LSVFPLSPVEVLWILVVTSCF) traverse the membrane as a helical segment. Over 854–884 (PAMDLGQERASDDILEESPNSTIFTWEVIID) the chain is Cytoplasmic. The helical transmembrane segment at 885 to 905 (MIVYGFWMAVCCLVCFVIIVY) threads the bilayer. Over 906-935 (GEGDPYLGVNCNKSSSSNSDVCELVFRGRS) the chain is Extracellular. The chain crosses the membrane as a helical span at residues 936 to 956 (ASFATMTWCALILAWECIHPY). Residues 957–983 (NSLFYMRQDTDHPWWKQTVIDLWDNQF) are Cytoplasmic-facing. A helical membrane pass occupies residues 984-1004 (LFWSVAIGFISVFPVVYIPVI). The Extracellular portion of the chain corresponds to 1005 to 1007 (NTK). The chain crosses the membrane as a helical span at residues 1008–1028 (VFLHGPIGYEWGLAVGFSILF). The Cytoplasmic portion of the chain corresponds to 1029–1082 (LAGSELWKWIKRIHKRKANKKAKNPEYELERSDPFKKYASFSRSNTMDRPELMV).

The protein belongs to the cation transport ATPase (P-type) (TC 3.A.3) family. Type IID subfamily. It depends on Mg(2+) as a cofactor. In terms of processing, the active site is phosphorylated in presence of sodium or potassium and in conditions of higher pH. Not phosphorylated in presence of calcium ions.

It localises to the cell membrane. It catalyses the reaction Na(+)(in) + ATP + H2O = Na(+)(out) + ADP + phosphate + H(+). It carries out the reaction K(+)(in) + ATP + H2O = K(+)(out) + ADP + phosphate + H(+). Functionally, catalyzes the hydrolysis of ATP coupled with the export of sodium and potassium from the cell. May be an inefficient sodium exporter. May transport other cations such as lithium. Sodium/potassium efflux ATPases are involved in salt tolerance and maintaining the membrane potential across the plasma membrane in high salinity (Na+) or alkaline (K+) environments. This is Sodium/potassium exporting P-type ATPase 2 from Schwanniomyces occidentalis (Yeast).